The chain runs to 481 residues: Leukocyte immunoglobulin-like receptor subfamily A member 6 (481 aa).

An N-terminal signal peptide occupies residues 1–23 (MTPALTALLCLGLSLGPRTRVQA). Residues 24–447 (GPFPKPTLWA…SHAKDYTVEN (424 aa)) lie on the Extracellular side of the membrane. Cysteines 49 and 98 form a disulfide. Residues 59 to 70 (QLDKEGSPEPLD) show a composition bias toward basic and acidic residues. The segment at 59–78 (QLDKEGSPEPLDRNNPLEPK) is disordered. Residue asparagine 139 is glycosylated (N-linked (GlcNAc...) asparagine). Cystine bridges form between cysteine 144-cysteine 196 and cysteine 245-cysteine 296. 2 consecutive Ig-like C2-type domains span residues 225–314 (PSLL…DPLN) and 323–408 (DTVS…HLLS). Asparagine 301 and asparagine 340 each carry an N-linked (GlcNAc...) asparagine glycan. The cysteines at positions 345 and 396 are disulfide-linked. Residues 419-439 (SGHSGGSSLPPTGPPSTPASH) form a disordered region. Residues 448 to 468 (LIRMGMAGLVLVFLGILLFEA) traverse the membrane as a helical segment. Over 469-481 (QHSQRNPQDAAGR) the chain is Cytoplasmic.

It is found in the membrane. Functionally, may act as receptor for class I MHC antigens. The sequence is that of Leukocyte immunoglobulin-like receptor subfamily A member 6 (LILRA6) from Homo sapiens (Human).